The sequence spans 150 residues: Arginine repressor (150 aa).

This sequence belongs to the ArgR family.

Its subcellular location is the cytoplasm. It participates in amino-acid biosynthesis; L-arginine biosynthesis [regulation]. In terms of biological role, regulates arginine biosynthesis genes. The protein is Arginine repressor of Clostridium kluyveri (strain NBRC 12016).